The following is a 399-amino-acid chain: Tyrosine--tRNA ligase (399 aa).

Residues 42 to 51 (PTAPDLHLGH) carry the 'HIGH' region motif. A 'KMSKS' region motif is present at residues 226-230 (KMSKS). Lys-229 is an ATP binding site. Residues 337–398 (IAIANLLKDA…GKRKFARITV (62 aa)) enclose the S4 RNA-binding domain.

This sequence belongs to the class-I aminoacyl-tRNA synthetase family. TyrS type 2 subfamily. As to quaternary structure, homodimer.

It localises to the cytoplasm. It catalyses the reaction tRNA(Tyr) + L-tyrosine + ATP = L-tyrosyl-tRNA(Tyr) + AMP + diphosphate + H(+). In terms of biological role, catalyzes the attachment of tyrosine to tRNA(Tyr) in a two-step reaction: tyrosine is first activated by ATP to form Tyr-AMP and then transferred to the acceptor end of tRNA(Tyr). This chain is Tyrosine--tRNA ligase, found in Colwellia psychrerythraea (strain 34H / ATCC BAA-681) (Vibrio psychroerythus).